We begin with the raw amino-acid sequence, 333 residues long: 2-oxoglutarate-dependent dioxygenase 21, chloroplastic (333 aa).

A chloroplast-targeting transit peptide spans 1–43 (MPAVAGSLYMASQHKGVPPPLPPPPRPLPVINLGRLTMDSASR). The Fe2OG dioxygenase domain occupies 180–281 (GVQFVALNNY…RISIASIHGL (102 aa)). The Fe cation site is built by H205, D207, and H262. R272 provides a ligand contact to 2-oxoglutarate.

It belongs to the iron/ascorbate-dependent oxidoreductase family. Requires Fe(2+) as cofactor. L-ascorbate is required as a cofactor. As to expression, expressed in roots.

It is found in the plastid. The protein localises to the chloroplast. The enzyme catalyses melatonin + 2-oxoglutarate + O2 = 2-hydroxymelatonin + succinate + CO2. Its function is as follows. Involved in melatonin degradation. Catalyzes the hydroxylation of melatonin to produce 2-hydroxymelatonin. The sequence is that of 2-oxoglutarate-dependent dioxygenase 21, chloroplastic from Oryza sativa subsp. japonica (Rice).